The sequence spans 930 residues: Isoleucine--tRNA ligase (930 aa).

Residues 57 to 67 (PYANGNIHVGH) carry the 'HIGH' region motif. Glu-554 contacts L-isoleucyl-5'-AMP. The 'KMSKS' region signature appears at 595-599 (KMSKS). Position 598 (Lys-598) interacts with ATP. Zn(2+) contacts are provided by Cys-888, Cys-891, Cys-908, and Cys-911.

The protein belongs to the class-I aminoacyl-tRNA synthetase family. IleS type 1 subfamily. In terms of assembly, monomer. It depends on Zn(2+) as a cofactor.

The protein resides in the cytoplasm. The enzyme catalyses tRNA(Ile) + L-isoleucine + ATP = L-isoleucyl-tRNA(Ile) + AMP + diphosphate. Catalyzes the attachment of isoleucine to tRNA(Ile). As IleRS can inadvertently accommodate and process structurally similar amino acids such as valine, to avoid such errors it has two additional distinct tRNA(Ile)-dependent editing activities. One activity is designated as 'pretransfer' editing and involves the hydrolysis of activated Val-AMP. The other activity is designated 'posttransfer' editing and involves deacylation of mischarged Val-tRNA(Ile). This is Isoleucine--tRNA ligase from Streptococcus pneumoniae (strain ATCC 700669 / Spain 23F-1).